Here is a 1481-residue protein sequence, read N- to C-terminus: Cystic fibrosis transmembrane conductance regulator (1481 aa).

Residues 1 to 77 (MQRSPLEKAS…KLINALRRCF (77 aa)) are Cytoplasmic-facing. The chain crosses the membrane as a helical span at residues 78–98 (FWRFMFYGILLYLGEVTKAVQ). One can recognise an ABC transmembrane type-1 1 domain in the interval 81–365 (FMFYGILLYL…WAVQTWYDSL (285 aa)). Residues 99 to 122 (PLLLGRIIASYDPDNKVERSIAIY) are Extracellular-facing. A helical membrane pass occupies residues 123–146 (LGIGLCLLFIVRMLLLHPAIFGLH). Topologically, residues 147 to 195 (HIGMQMRIAMFSLIYKKILKLSSRVLDKISIGQLVSLLSNNLNKFDEGL) are cytoplasmic. A helical transmembrane segment spans residues 196-216 (ALAHFVWIAPLQVMLLMGLLW). Residues 217-222 (ELLQAS) are Extracellular-facing. A helical membrane pass occupies residues 223-243 (AFCGLGFLIVLALFQSGLGRM). Residues 244-298 (MMKYRDQRAGKINERLVITSEMIENIQSVKAYCWEEAMEKMIENLRQTELKLTRK) are Cytoplasmic-facing. The helical transmembrane segment at 299 to 319 (AAYVRYFNSSAFFFSGFFVVF) threads the bilayer. The Extracellular portion of the chain corresponds to 320–339 (LSVLPYALIKGIILRKIFTT). A helical transmembrane segment spans residues 340-358 (ISFCIVLRMAVTRQFPWAV). At 359 to 858 (QTWYDSLGAI…YLRYITVHKS (500 aa)) the chain is on the cytoplasmic side. ATP contacts are provided by residues Trp-401, 458–465 (GSTGAGKT), and Gln-493. Positions 423–646 (NGDNSLFFSN…RPDFSSKLMG (224 aa)) constitute an ABC transporter 1 domain. A lipid anchor (S-palmitoyl cysteine) is attached at Cys-524. Ser-549 and Ser-660 each carry phosphoserine. Residues 654 to 831 (SAERRNSILT…EEINEEDLKE (178 aa)) are disordered R region. Residue Ser-670 is modified to Phosphoserine; by PKA. Ser-686 is modified (phosphoserine). Lys-688 participates in a covalent cross-link: Glycyl lysine isopeptide (Lys-Gly) (interchain with G-Cter in ubiquitin). 2 positions are modified to phosphoserine: Ser-700 and Ser-712. At Thr-717 the chain carries Phosphothreonine. 5 positions are modified to phosphoserine: Ser-737, Ser-768, Ser-790, Ser-795, and Ser-813. A helical membrane pass occupies residues 859–879 (LIFVLIWCLVIFLAEVAVSLV). Positions 859 to 1155 (LIFVLIWCLV…AVNSSIDVDS (297 aa)) constitute an ABC transmembrane type-1 2 domain. Topologically, residues 880 to 918 (LLWLLGNAPAYNKGNSTISANSSYAVIITSTSAYYVFYI) are extracellular. N-linked (GlcNAc...) asparagine glycans are attached at residues Asn-894 and Asn-900. The discontinuously helical transmembrane segment at 919-939 (YVGVADTLLALGFFRGLPLVH) threads the bilayer. Over 940–990 (TLITVSKILHHKMLHSVLQAPMSTLNALKAGGILNRFSKDIAILDDLLPLT) the chain is Cytoplasmic. The helical transmembrane segment at 991–1011 (IFDFIQLLLIVIGAVAVVSVL) threads the bilayer. Over 1012-1013 (QP) the chain is Extracellular. The helical transmembrane segment at 1014–1034 (YIFLATVPVIVTFIILRAYFL) threads the bilayer. The Cytoplasmic portion of the chain corresponds to 1035-1095 (HTSQQLKQLE…TANWFLYLST (61 aa)). The chain crosses the membrane as a helical span at residues 1096 to 1116 (LRWFQMRIEMVFVIFFIVVTF). At 1117–1130 (ISILTTGEGEGQVG) the chain is on the extracellular side. The chain crosses the membrane as a helical span at residues 1131–1151 (IILTLAMNIMGTLQWAVNSSI). At 1152-1481 (DVDSLMRSVS…TEEEVQDTRL (330 aa)) the chain is on the cytoplasmic side. Residues 1211 to 1444 (MTVKDLTARY…KSLFRQAISP (234 aa)) form the ABC transporter 2 domain. ATP contacts are provided by residues Tyr-1220 and 1245–1252 (GRTGSGKS). Positions 1387–1481 (RTLKQAFADC…TEEEVQDTRL (95 aa)) are interaction with GORASP2. Residue Cys-1396 is the site of S-palmitoyl cysteine attachment. Phosphoserine is present on residues Ser-1445 and Ser-1457. The disordered stretch occupies residues 1449–1481 (KLFPRRNSSKHKSRPPITALKEETEEEVQDTRL). Residues 1450-1462 (LFPRRNSSKHKSR) show a composition bias toward basic residues. A compositionally biased stretch (acidic residues) spans 1471–1481 (ETEEEVQDTRL). The PDZ-binding signature appears at 1479–1481 (TRL).

The protein belongs to the ABC transporter superfamily. ABCC family. CFTR transporter (TC 3.A.1.202) subfamily. In terms of assembly, monomer; does not require oligomerization for channel activity. May form oligomers in the membrane. Interacts with SLC26A3, SLC26A6 and NHERF1. Interacts with SHANK2. Interacts with MYO6. Interacts (via C-terminus) with GOPC (via PDZ domain); this promotes CFTR internalization and thereby decreases channel activity. Interacts with SLC4A7 through NHERF1. Found in a complex with MYO5B and RAB11A. Interacts with ANO1. Interacts with SLC26A8. Interacts with AHCYL1; the interaction increases CFTR activity. Interacts with CSE1L. The core-glycosylated form interacts with GORASP2 (via PDZ GRASP-type 1 domain) in respone to ER stress. Interacts with MARCHF2; the interaction leads to CFTR ubiqtuitination and degradation. Interacts with ADGRG2. In terms of processing, N-glycosylated. Post-translationally, phosphorylated; cAMP treatment promotes phosphorylation and activates the channel. Dephosphorylation decreases the ATPase activity (in vitro). Phosphorylation at PKA sites activates the channel. Phosphorylation at PKC sites enhances the response to phosphorylation by PKA. Phosphorylated by AMPK; this inhibits channel activity. Ubiquitinated, leading to its degradation in the lysosome. Deubiquitination by USP10 in early endosomes enhances its endocytic recycling to the cell membrane. Ubiquitinated by RNF185 during ER stress. Ubiquitinated by MARCHF2.

The protein localises to the apical cell membrane. It localises to the early endosome membrane. It is found in the cell membrane. Its subcellular location is the recycling endosome membrane. The protein resides in the endoplasmic reticulum membrane. The protein localises to the nucleus. The catalysed reaction is ATP + H2O + closed Cl(-) channel = ADP + phosphate + open Cl(-) channel.. It catalyses the reaction chloride(in) = chloride(out). The enzyme catalyses hydrogencarbonate(in) = hydrogencarbonate(out). It carries out the reaction ATP + H2O = ADP + phosphate + H(+). Functionally, epithelial ion channel that plays an important role in the regulation of epithelial ion and water transport and fluid homeostasis. Mediates the transport of chloride ions across the cell membrane. Possesses an intrinsic ATPase activity and utilizes ATP to gate its channel; the passive flow of anions through the channel is gated by cycles of ATP binding and hydrolysis by the ATP-binding domains. The ion channel is also permeable to HCO(3)(-); selectivity depends on the extracellular chloride concentration. Exerts its function also by modulating the activity of other ion channels and transporters. Contributes to the regulation of the pH and the ion content of the epithelial fluid layer. Modulates the activity of the epithelial sodium channel (ENaC) complex, in part by regulating the cell surface expression of the ENaC complex. May regulate bicarbonate secretion and salvage in epithelial cells by regulating the transporter SLC4A7. Can inhibit the chloride channel activity of ANO1. Plays a role in the chloride and bicarbonate homeostasis during sperm epididymal maturation and capacitation. The chain is Cystic fibrosis transmembrane conductance regulator from Microcebus murinus (Gray mouse lemur).